A 312-amino-acid chain; its full sequence is NAD-dependent protein deacylase Sirt4 (312 aa).

The transit peptide at 1–16 directs the protein to the mitochondrion; that stretch reads MRVGQLLRFRSTSLRS. Residues 28 to 312 enclose the Deacetylase sirtuin-type domain; it reads KPVVEDDIKR…FDFRNSKSVS (285 aa). Residues 53–73 and 134–137 each bind NAD(+); these read GAGI…VGLY and QNVD. Residue His152 is the Proton acceptor of the active site. Residues Cys160, Cys163, Cys211, and Cys214 each coordinate Zn(2+). Residues 251–253, 277–279, and Cys295 each bind NAD(+); these read GSS and NIG.

Belongs to the sirtuin family. Class II subfamily. It depends on Zn(2+) as a cofactor.

The protein localises to the mitochondrion matrix. It catalyses the reaction N(6)-acetyl-L-lysyl-[protein] + NAD(+) + H2O = 2''-O-acetyl-ADP-D-ribose + nicotinamide + L-lysyl-[protein]. In terms of biological role, NAD-dependent protein deacylase. Catalyzes the NAD-dependent hydrolysis of acyl groups from lysine residues. The protein is NAD-dependent protein deacylase Sirt4 (Sirt4) of Drosophila melanogaster (Fruit fly).